A 243-amino-acid chain; its full sequence is Pyridoxine 5'-phosphate synthase (243 aa).

Asn-9 lines the 3-amino-2-oxopropyl phosphate pocket. 11–12 (DH) is a 1-deoxy-D-xylulose 5-phosphate binding site. Arg-20 lines the 3-amino-2-oxopropyl phosphate pocket. His-45 acts as the Proton acceptor in catalysis. Positions 47 and 52 each coordinate 1-deoxy-D-xylulose 5-phosphate. Glu-72 (proton acceptor) is an active-site residue. Thr-102 contacts 1-deoxy-D-xylulose 5-phosphate. His-193 functions as the Proton donor in the catalytic mechanism. 3-amino-2-oxopropyl phosphate is bound by residues Gly-194 and 215 to 216 (GH).

Belongs to the PNP synthase family. Homooctamer; tetramer of dimers.

The protein resides in the cytoplasm. The enzyme catalyses 3-amino-2-oxopropyl phosphate + 1-deoxy-D-xylulose 5-phosphate = pyridoxine 5'-phosphate + phosphate + 2 H2O + H(+). The protein operates within cofactor biosynthesis; pyridoxine 5'-phosphate biosynthesis; pyridoxine 5'-phosphate from D-erythrose 4-phosphate: step 5/5. Catalyzes the complicated ring closure reaction between the two acyclic compounds 1-deoxy-D-xylulose-5-phosphate (DXP) and 3-amino-2-oxopropyl phosphate (1-amino-acetone-3-phosphate or AAP) to form pyridoxine 5'-phosphate (PNP) and inorganic phosphate. The protein is Pyridoxine 5'-phosphate synthase of Salmonella paratyphi A (strain ATCC 9150 / SARB42).